A 258-amino-acid chain; its full sequence is Regulatory protein RecX (258 aa).

It belongs to the RecX family.

It is found in the cytoplasm. In terms of biological role, modulates RecA activity. The protein is Regulatory protein RecX of Streptococcus thermophilus (strain ATCC BAA-491 / LMD-9).